We begin with the raw amino-acid sequence, 95 residues long: Large ribosomal subunit protein uL23 (95 aa).

It belongs to the universal ribosomal protein uL23 family. As to quaternary structure, part of the 50S ribosomal subunit. Contacts protein L29, and trigger factor when it is bound to the ribosome.

Functionally, one of the early assembly proteins it binds 23S rRNA. One of the proteins that surrounds the polypeptide exit tunnel on the outside of the ribosome. Forms the main docking site for trigger factor binding to the ribosome. This is Large ribosomal subunit protein uL23 from Geobacillus kaustophilus (strain HTA426).